The primary structure comprises 471 residues: MNKGHVIQVMGPVVDVKFDNGQLPAIYNSLTVKIERPNEEPTILALEVALHLGDDSVRTIAMSSTDGLQRGAEVTDSGKAISVPVGEVTLGRVFNVLGEVIDLGEEIPADARRDSIHREAPTFEELSTTVEILETGIKVVDLLAPYIKGGKIGLFGGAGVGKTVLIQELINNIAQEHSGISVFAGVGERTREGNDLFFEMSDSGVIKQTAMVFGQMNEPPGARMRVALTGLTMAEYFRDEQGADVLLFIDNIFRFTQAGSEVSALLGRMPSAVGYQPTLATEMGKLQERITSTNKGSVTSIQAIYVPADDYTDPAPATTFAHLDATTNLERKLSEMGIYPAVDPLASTSRALSPEIVGAEHYAVATGVQRTIQRYRELQDIIAILGMDELSDEDKQTVERARRIQFFLSQNFHVAEQFTGQKGSYVPVKETVRSFKEILDGKWDHLPEDAFRLVGSIDEVVEKAKSMGVEV.

G156–T163 provides a ligand contact to ATP.

This sequence belongs to the ATPase alpha/beta chains family. F-type ATPases have 2 components, CF(1) - the catalytic core - and CF(0) - the membrane proton channel. CF(1) has five subunits: alpha(3), beta(3), gamma(1), delta(1), epsilon(1). CF(0) has three main subunits: a(1), b(2) and c(9-12). The alpha and beta chains form an alternating ring which encloses part of the gamma chain. CF(1) is attached to CF(0) by a central stalk formed by the gamma and epsilon chains, while a peripheral stalk is formed by the delta and b chains.

The protein localises to the cell membrane. The catalysed reaction is ATP + H2O + 4 H(+)(in) = ADP + phosphate + 5 H(+)(out). Its function is as follows. Produces ATP from ADP in the presence of a proton gradient across the membrane. The catalytic sites are hosted primarily by the beta subunits. The sequence is that of ATP synthase subunit beta from Lysinibacillus sphaericus (strain C3-41).